We begin with the raw amino-acid sequence, 65 residues long: Small ribosomal subunit protein eS27 (65 aa).

Residues C20, C23, C39, and C42 each contribute to the Zn(2+) site. The C4-type zinc finger occupies 20-42; sequence CIDCGNEQIVFSHPATPVRCLVC.

Belongs to the eukaryotic ribosomal protein eS27 family. Part of the 30S ribosomal subunit. Zn(2+) serves as cofactor.

This Thermococcus kodakarensis (strain ATCC BAA-918 / JCM 12380 / KOD1) (Pyrococcus kodakaraensis (strain KOD1)) protein is Small ribosomal subunit protein eS27.